Consider the following 350-residue polypeptide: Phosphotriesterase-related protein (350 aa).

Histidine 22, histidine 24, glutamate 169, histidine 201, histidine 230, and aspartate 298 together coordinate a divalent metal cation.

It belongs to the metallo-dependent hydrolases superfamily. Phosphotriesterase family. It depends on a divalent metal cation as a cofactor.

This is Phosphotriesterase-related protein from Drosophila mojavensis (Fruit fly).